Reading from the N-terminus, the 1152-residue chain is Autotransporter adhesin BpaC (1152 aa).

The signal sequence occupies residues 1–71 (MNRIFKSIWC…PFAEEAMAAN (71 aa)). The tract at residues 72 to 1061 (NAGVCLTYNG…VGQLNSAVSG (990 aa)) is surface exposed passenger domain. Disordered stretches follow at residues 420–886 (GLQG…AGAT) and 900–949 (TATG…ESAA). Over residues 427-442 (ANTGTASGDNSTASGD) the composition is skewed to polar residues. Residues 443-504 (NATASGTNST…ANGTNSTASG (62 aa)) are compositionally biased toward low complexity. Positions 505–519 (DNSTASGTNASATGE) are enriched in polar residues. Residues 520–588 (NSTATGTDST…ANGTNSTASG (69 aa)) are compositionally biased toward low complexity. The span at 589–603 (DNSTASGTNASATGE) shows a compositional bias: polar residues. Over residues 604-630 (NSTATGTDSTASGSNSTANGTNSTASG) the composition is skewed to low complexity. A compositionally biased stretch (polar residues) spans 631–645 (DNSTASGTNASATGE). Positions 646–672 (NSTATGTDSTASGSNSTANGTNSTASG) are enriched in low complexity. Over residues 673–687 (DNSTASGTNASATGE) the composition is skewed to polar residues. A compositionally biased stretch (low complexity) spans 688–714 (NSTATGTDSTASGSNSTANGTNSTASG). Residues 715-729 (DNSTASGTNASATGE) show a composition bias toward polar residues. The span at 730-756 (NSTATGTDSTASGSNSTANGANSTASG) shows a compositional bias: low complexity. A compositionally biased stretch (polar residues) spans 757–771 (DNSTASGTNASATGE). Low complexity-rich tracts occupy residues 772–840 (NSTA…TASG) and 848–886 (TNASATGENSTATGTASTASGSNSTANGANSTASGAGAT). Residues 1062–1099 (IRNQMDGMQGQIDTLARDAYSGIAAATALTMIPDVDPG) form an outer membrane translocation of the passenger domain region. The tract at residues 1100 to 1152 (KTLAVGIGTANFKGYQASALGATARITQNLKVKTGVSYSGSNYVWGAGMSYQW) is translocator domain.

The protein belongs to the autotransporter-2 (AT-2) (TC 1.B.40) family. Homotrimer.

Its subcellular location is the cell surface. It is found in the cell outer membrane. Functionally, involved in virulence. Mediates adherence to human respiratory epithelial cells. The chain is Autotransporter adhesin BpaC from Burkholderia pseudomallei (strain 1026b).